Reading from the N-terminus, the 243-residue chain is Proteasome subunit beta (243 aa).

Basic and acidic residues-rich tracts occupy residues 1 to 11 (MRTPTHDEFSG) and 33 to 47 (NADR…KETK). A propeptide spans 1–49 (MRTPTHDEFSGRLDSLNGDRSNVFGPELGEFSNADRRADELGDKETKTG) (removed in mature form; by autocatalysis). The segment at 1–50 (MRTPTHDEFSGRLDSLNGDRSNVFGPELGEFSNADRRADELGDKETKTGT) is disordered. The Nucleophile role is filled by threonine 50. Residue serine 129 is modified to Phosphoserine.

It belongs to the peptidase T1B family. In terms of assembly, the 20S proteasome core is composed of 14 alpha and 14 beta subunits that assemble into four stacked heptameric rings, resulting in a barrel-shaped structure. The two inner rings, each composed of seven catalytic beta subunits, are sandwiched by two outer rings, each composed of seven alpha subunits. H.volcanii produces at least 2 types of 20S proteasomes: an alpha1-beta proteasome and a proteasome containing all three subunits (alpha1, alpha2, and beta) that appears to be asymmetrical with homo-oligomeric alpha1 and alpha2 rings positioned on separate ends. The catalytic chamber with the active sites is on the inside of the barrel. Has probably a gated structure, the ends of the cylinder being occluded by the N-termini of the alpha-subunits. Is likely capped at one or both ends by the proteasome regulatory ATPase, PAN.

It is found in the cytoplasm. The catalysed reaction is Cleavage of peptide bonds with very broad specificity.. Its activity is regulated as follows. The formation of the proteasomal ATPase PAN-20S proteasome complex, via the docking of the C-termini of PAN into the intersubunit pockets in the alpha-rings, triggers opening of the gate for substrate entry. Interconversion between the open-gate and close-gate conformations leads to a dynamic regulation of the 20S proteasome proteolysis activity. In vitro, the chymotrypsin-like activity of the alpha1-beta proteasome is potently inhibited by carbobenzoxyl-leucinyl-leucinyl-leucinal-H (MG132) and significantly by N-acetyl-leucinyl-leucinyl-norleucinal-H (calpain inhibitor I). Component of the proteasome core, a large protease complex with broad specificity involved in protein degradation. The H.volcanii alpha1-beta proteasome is able to cleave oligopeptides after Phe, Tyr and Trp, poorly after Glu but not after Arg. Thus, displays chymotrypsin-like activity, low caspase-like activity but no trypsin-like activity. This is Proteasome subunit beta from Haloferax volcanii (strain ATCC 29605 / DSM 3757 / JCM 8879 / NBRC 14742 / NCIMB 2012 / VKM B-1768 / DS2) (Halobacterium volcanii).